Reading from the N-terminus, the 207-residue chain is Large ribosomal subunit protein uL4 (207 aa).

This sequence belongs to the universal ribosomal protein uL4 family. Part of the 50S ribosomal subunit.

Functionally, one of the primary rRNA binding proteins, this protein initially binds near the 5'-end of the 23S rRNA. It is important during the early stages of 50S assembly. It makes multiple contacts with different domains of the 23S rRNA in the assembled 50S subunit and ribosome. Its function is as follows. Forms part of the polypeptide exit tunnel. In Geobacter metallireducens (strain ATCC 53774 / DSM 7210 / GS-15), this protein is Large ribosomal subunit protein uL4.